A 493-amino-acid polypeptide reads, in one-letter code: Probable glycine dehydrogenase (decarboxylating) subunit 2 (493 aa).

N6-(pyridoxal phosphate)lysine is present on lysine 269.

This sequence belongs to the GcvP family. C-terminal subunit subfamily. As to quaternary structure, the glycine cleavage system is composed of four proteins: P, T, L and H. In this organism, the P 'protein' is a heterodimer of two subunits. Pyridoxal 5'-phosphate is required as a cofactor.

It carries out the reaction N(6)-[(R)-lipoyl]-L-lysyl-[glycine-cleavage complex H protein] + glycine + H(+) = N(6)-[(R)-S(8)-aminomethyldihydrolipoyl]-L-lysyl-[glycine-cleavage complex H protein] + CO2. Functionally, the glycine cleavage system catalyzes the degradation of glycine. The P protein binds the alpha-amino group of glycine through its pyridoxal phosphate cofactor; CO(2) is released and the remaining methylamine moiety is then transferred to the lipoamide cofactor of the H protein. In Chloroherpeton thalassium (strain ATCC 35110 / GB-78), this protein is Probable glycine dehydrogenase (decarboxylating) subunit 2.